Here is a 606-residue protein sequence, read N- to C-terminus: Gamma-aminobutyric acid receptor subunit beta (606 aa).

The first 44 residues, 1-44 (MSDSKMDKLARMAPLPRTPLLTIWLAINMALIAQETGHKRIHTV), serve as a signal peptide directing secretion. Residues 45 to 268 (QAATGGGSML…CEIQFVRSMG (224 aa)) are Extracellular-facing. Residue asparagine 58 is glycosylated (N-linked (GlcNAc...) asparagine). An intrachain disulfide couples cysteine 185 to cysteine 199. An N-linked (GlcNAc...) asparagine glycan is attached at asparagine 253. 3 helical membrane-spanning segments follow: residues 269–291 (YYLI…SFWL), 297–316 (PARV…LMSS), and 333–356 (YLGT…YMAK). Topologically, residues 357-568 (RIQMRKQRFM…LGITPSDIDK (212 aa)) are cytoplasmic. 2 disordered regions span residues 376-451 (KQQL…VSNR) and 482-542 (HDPK…AAVP). The segment covering 381-395 (GANQQQANPNPNANV) has biased composition (low complexity). Residues 396-425 (GGPGGVGVGPGGPGGPGGGVNVGVGMGMGP) are compositionally biased toward gly residues. Residues 430–443 (GHGHHAHSHGHPHA) are compositionally biased toward basic residues. Residues 499–536 (GGRGGPQSHGPGPGQGGGPPGGGGGGGGGGGPPEGGGD) are compositionally biased toward gly residues. The chain crosses the membrane as a helical span at residues 569–590 (YSRIVFPVCFVCFNLMYWIIYL).

It belongs to the ligand-gated ion channel (TC 1.A.9) family. Gamma-aminobutyric acid receptor (TC 1.A.9.5) subfamily. In terms of assembly, forms oligomers. Interacts with Nlg4; the interaction mediates Rdl clustering. Interacts with Fbxl4; the interaction mediates Rdl degradation. Expressed in different parts of the brain: the mushroom bodies (alpha, alpha', beta, beta', gamma lobes and peduncles), the neurons projecting to the columnar-type neuron LC9 optic glomerulus, in interneurons connecting the paired olfactory lobes, antennal lobes, PDF-expressing small and large ventral lateral neurons (LNvs) of the circadian clock and lobula columnar neuron 11 (LC11) (at protein level). Expressed in all major ON pathway medulla neurons (Mi1, Tm3, Mi4, and Mi9) and in OFF pathway neurons (Tm1, Tm2, Tm4, and Tm9).

The protein localises to the cell membrane. It is found in the postsynaptic cell membrane. Its subcellular location is the cell projection. The protein resides in the dendrite. It localises to the axon. Its activity is regulated as follows. Activated by agonist muscimol. Insensitive to zinc, glycine, glutamate, and baclofen, loreclezole, to antagonist bicuculline, glycine-receptor antagonist strychnine, and nonselective GABA and glycine antagonist RU 5135. Insensitive to flunitrazepam, pentobarbitone or pregnane steroids such as 5alpha-pregnan-3alpha-ol-20-one. Inhibited by insecticides picrotoxin (PTX), cyclodiene dieldrin, TBPS and lindane. Inhibited by ivermectin, fipronil and pyrafluprole. With respect to regulation, inhibited by insecticides picrotoxin (PTX). Functionally, gamma-aminobutyric acid (GABA) receptor voltage channel subunit. GABA, an inhibitory neurotransmitter, mediates neuronal inhibition by binding to the GABA receptor and opening an integral chloride channel. Together with glutamate receptor GluClalpha, plays an important role in the visual response by regulating the activity of ON/OFF-selective neurons. Plays a role in promoting sleep and sleep latency by regulating the activity of peptidergic PDF neurons. In large ventral lateral clock neurons, clustering is mediated by Nlg4 and protein levels undergo daily degradation in response to the circadian clock. In neurons in the mushroom bodies, has a role in odor memory acquisition where it inhibits appetitive and aversive olfactory learning, probably upstream of Adcy1/adenylate cyclase 1 and GTPase activating protein Nf1. In male-specific GABAergic neurons, plays a role in inhibiting male aggressive behavior during courtship. Gamma-aminobutyric acid (GABA) receptor voltage channel subunit. This is Gamma-aminobutyric acid receptor subunit beta (Rdl) from Drosophila melanogaster (Fruit fly).